The following is a 348-amino-acid chain: Protein RecA (348 aa).

An ATP-binding site is contributed by 66–73; that stretch reads GPESSGKT.

This sequence belongs to the RecA family.

It localises to the cytoplasm. Functionally, can catalyze the hydrolysis of ATP in the presence of single-stranded DNA, the ATP-dependent uptake of single-stranded DNA by duplex DNA, and the ATP-dependent hybridization of homologous single-stranded DNAs. It interacts with LexA causing its activation and leading to its autocatalytic cleavage. This Legionella pneumophila protein is Protein RecA.